A 458-amino-acid chain; its full sequence is Bifunctional protein GlmU (458 aa).

The interval methionine 1–arginine 229 is pyrophosphorylase. Residues leucine 11 to glycine 14, lysine 25, glutamine 76, glycine 81 to threonine 82, tyrosine 103 to aspartate 105, glycine 140, glutamate 154, asparagine 169, and asparagine 227 each bind UDP-N-acetyl-alpha-D-glucosamine. Position 105 (aspartate 105) interacts with Mg(2+). Residue asparagine 227 coordinates Mg(2+). Positions glutamine 230 to alanine 250 are linker. The segment at glycine 251–lysine 458 is N-acetyltransferase. UDP-N-acetyl-alpha-D-glucosamine is bound by residues arginine 333 and lysine 351. Histidine 363 serves as the catalytic Proton acceptor. UDP-N-acetyl-alpha-D-glucosamine-binding residues include tyrosine 366 and asparagine 377. Residues alanine 380, asparagine 386–tyrosine 387, serine 405, alanine 423, and arginine 440 contribute to the acetyl-CoA site.

This sequence in the N-terminal section; belongs to the N-acetylglucosamine-1-phosphate uridyltransferase family. It in the C-terminal section; belongs to the transferase hexapeptide repeat family. In terms of assembly, homotrimer. Requires Mg(2+) as cofactor.

It localises to the cytoplasm. It carries out the reaction alpha-D-glucosamine 1-phosphate + acetyl-CoA = N-acetyl-alpha-D-glucosamine 1-phosphate + CoA + H(+). The enzyme catalyses N-acetyl-alpha-D-glucosamine 1-phosphate + UTP + H(+) = UDP-N-acetyl-alpha-D-glucosamine + diphosphate. Its pathway is nucleotide-sugar biosynthesis; UDP-N-acetyl-alpha-D-glucosamine biosynthesis; N-acetyl-alpha-D-glucosamine 1-phosphate from alpha-D-glucosamine 6-phosphate (route II): step 2/2. The protein operates within nucleotide-sugar biosynthesis; UDP-N-acetyl-alpha-D-glucosamine biosynthesis; UDP-N-acetyl-alpha-D-glucosamine from N-acetyl-alpha-D-glucosamine 1-phosphate: step 1/1. It functions in the pathway bacterial outer membrane biogenesis; LPS lipid A biosynthesis. Catalyzes the last two sequential reactions in the de novo biosynthetic pathway for UDP-N-acetylglucosamine (UDP-GlcNAc). The C-terminal domain catalyzes the transfer of acetyl group from acetyl coenzyme A to glucosamine-1-phosphate (GlcN-1-P) to produce N-acetylglucosamine-1-phosphate (GlcNAc-1-P), which is converted into UDP-GlcNAc by the transfer of uridine 5-monophosphate (from uridine 5-triphosphate), a reaction catalyzed by the N-terminal domain. This Pasteurella multocida (strain Pm70) protein is Bifunctional protein GlmU.